A 155-amino-acid chain; its full sequence is MRSLPFFCRGQVVRGFGRGSKQLGIPTANFPEQVVDNLPADVSTGIYYGWASVGSGDVHKMVVSIGWNPYYKNVKKSMETHIIHTFKEDFYGEILNVAIVGYLRPEKNFDSLESLISAIQGDIEEAKKQLDLPEHLKLKDDNFFQVSKGKIMNGH.

ATP-binding residues include glycine 15, lysine 21, threonine 27, and asparagine 29. Residues threonine 27 and asparagine 29 each coordinate Mg(2+). Glutamate 79 serves as the catalytic Nucleophile. The ATP site is built by isoleucine 82, histidine 84, and tyrosine 91. 3 residues coordinate FMN: arginine 104, lysine 107, and phenylalanine 109.

Monomer. Directly interacts with TNFRSF1A death domain; this interaction may be supported by TRADD. In the absence of TNFRSF1A, interacts with TRADD. Independently of TNFRSF1A, interacts with the NADPH oxidase subunit CYBA. It depends on Zn(2+) as a cofactor. Requires Mg(2+) as cofactor.

The protein localises to the cytoplasm. It catalyses the reaction riboflavin + ATP = FMN + ADP + H(+). Its pathway is cofactor biosynthesis; FMN biosynthesis; FMN from riboflavin (ATP route): step 1/1. Functionally, catalyzes the phosphorylation of riboflavin (vitamin B2) to form flavin-mononucleotide (FMN), hence rate-limiting enzyme in the synthesis of FAD. Essential for TNF-induced reactive oxygen species (ROS) production. Through its interaction with both TNFRSF1A and CYBA, physically and functionally couples TNFRSF1A to NADPH oxidase. TNF-activation of RFK may enhance the incorporation of FAD in NADPH oxidase, a critical step for the assembly and activation of NADPH oxidase. This Mus musculus (Mouse) protein is Riboflavin kinase (Rfk).